A 507-amino-acid polypeptide reads, in one-letter code: AMSH-like ubiquitin thioesterase 3 (507 aa).

The stretch at 73–107 (QERLGSRKRLRAVINELESLKPEFNQLVDKLNRVE) forms a coiled coil. 2 disordered regions span residues 133–162 (HKAS…LTSS) and 214–242 (PSNT…LNGD). Polar residues-rich tracts occupy residues 146-162 (LPTS…LTSS), 214-224 (PSNTDWGSADN), and 232-242 (PSSSSASLNGD). One can recognise an MPN domain in the interval 333–463 (LHVPVRIMDD…IFHLSDPSGV (131 aa)). Zn(2+)-binding residues include His411, His413, Asp424, His426, Cys469, His475, and His477. The JAMM motif motif lies at 411–424 (HTHPTQTCFMSSVD).

The protein belongs to the peptidase M67C family. In terms of assembly, interacts with PATL1 and PATL2. May also bind to HSC70-1, HSC70-3, VHA-A, BGLU23 and EPSIN1. Interacts with BRO1/ALIX. Requires Zn(2+) as cofactor.

It is found in the membrane. It localises to the cytoplasm. Its subcellular location is the vacuole membrane. The protein resides in the late endosome. In terms of biological role, zinc metalloprotease that cleaves 'Lys-48'- and 'Lys-63'-linked polyubiquitin chains, but is not implicated in protein degradation by the 26S proteasome, deneddylation, or desumoylation. Required for intracellular trafficking (e.g. trafficking from the Golgi to the vacuole and the vacuolar trafficking of endocytosed cargo), endocytosis and vacuole biogenesis. The chain is AMSH-like ubiquitin thioesterase 3 (AMSH3) from Arabidopsis thaliana (Mouse-ear cress).